Reading from the N-terminus, the 157-residue chain is UPF0254 protein MTH_1148 (157 aa).

Belongs to the UPF0254 family.

The protein is UPF0254 protein MTH_1148 of Methanothermobacter thermautotrophicus (strain ATCC 29096 / DSM 1053 / JCM 10044 / NBRC 100330 / Delta H) (Methanobacterium thermoautotrophicum).